Consider the following 272-residue polypeptide: Centromere protein V-like protein 1 (272 aa).

The segment covering 1-17 (MGRVRNRATAQRRRRKR) has biased composition (basic residues). Disordered stretches follow at residues 1 to 23 (MGRVRNRATAQRRRRKRPGDPPA) and 65 to 95 (RRVRKAGPRDLLPSAPTPDPPGPAPSPKDLD). Residues 79–90 (APTPDPPGPAPS) are compositionally biased toward pro residues. The 114-residue stretch at 133-246 (HTGGCHCGAV…EEVGGGDPGE (114 aa)) folds into the CENP-V/GFA domain. Zn(2+) contacts are provided by cysteine 137, cysteine 139, cysteine 157, cysteine 159, cysteine 162, cysteine 201, and cysteine 204. A disordered region spans residues 240 to 272 (GGGDPGEEAAEEHKAIHKTSSQSAPACPREQEQ).

Belongs to the Gfa family. Zn(2+) serves as cofactor.

The chain is Centromere protein V-like protein 1 from Homo sapiens (Human).